A 200-amino-acid chain; its full sequence is Large ribosomal subunit protein uL4 (200 aa).

The tract at residues 42-65 (TRAQKTRSEVSGGGAKPWRQKGTG) is disordered.

This sequence belongs to the universal ribosomal protein uL4 family. In terms of assembly, part of the 50S ribosomal subunit.

In terms of biological role, one of the primary rRNA binding proteins, this protein initially binds near the 5'-end of the 23S rRNA. It is important during the early stages of 50S assembly. It makes multiple contacts with different domains of the 23S rRNA in the assembled 50S subunit and ribosome. Forms part of the polypeptide exit tunnel. This is Large ribosomal subunit protein uL4 from Vibrio parahaemolyticus serotype O3:K6 (strain RIMD 2210633).